Here is a 461-residue protein sequence, read N- to C-terminus: Argininosuccinate lyase (461 aa).

Belongs to the lyase 1 family. Argininosuccinate lyase subfamily.

The protein resides in the cytoplasm. The enzyme catalyses 2-(N(omega)-L-arginino)succinate = fumarate + L-arginine. The protein operates within amino-acid biosynthesis; L-arginine biosynthesis; L-arginine from L-ornithine and carbamoyl phosphate: step 3/3. Its activity is regulated as follows. Strongly inhibited by L-arginine. Inhibitory effects are lowered at pH 7.0 compared to those at pH 8.0. At 45 degrees Celsius and pH 8.0, activity decreases to 94%, 74% and 37% in the presence of 0.6 mM, 2.8 mM and 10 mM arginine, respectively. Activity also decreases to 86% in the presence of 10 mM sodium succinate or sodium citrate. Activity does not decrease in the presence of 1 mM or 10 mM L-lysine, which has a similar structure to arginine. Functionally, catalyzes the last step of arginine biosynthesis, the conversion of argininosuccinate into L-arginine and fumarate. This is Argininosuccinate lyase from Synechocystis sp. (strain ATCC 27184 / PCC 6803 / Kazusa).